The sequence spans 53 residues: ATP synthase protein 8 (53 aa).

Residues 5–25 (APISWLTLFFVFSITLVIFNI) form a helical membrane-spanning segment.

It belongs to the ATPase protein 8 family. F-type ATPases have 2 components, CF(1) - the catalytic core - and CF(0) - the membrane proton channel.

The protein localises to the mitochondrion membrane. Functionally, mitochondrial membrane ATP synthase (F(1)F(O) ATP synthase or Complex V) produces ATP from ADP in the presence of a proton gradient across the membrane which is generated by electron transport complexes of the respiratory chain. F-type ATPases consist of two structural domains, F(1) - containing the extramembraneous catalytic core and F(0) - containing the membrane proton channel, linked together by a central stalk and a peripheral stalk. During catalysis, ATP synthesis in the catalytic domain of F(1) is coupled via a rotary mechanism of the central stalk subunits to proton translocation. Part of the complex F(0) domain. Minor subunit located with subunit a in the membrane. This is ATP synthase protein 8 from Aedes aegypti (Yellowfever mosquito).